Consider the following 31-residue polypeptide: Cyclotide vpub-A (31 aa).

A cross-link (cyclopeptide (Gly-Asn)) is located at residues 1 to 31 (GVIPCGESCVFIPCISAVIGCSCKSKVCYRN). Cystine bridges form between C5–C21, C9–C23, and C14–C28.

It belongs to the cyclotide family. Bracelet subfamily. In terms of processing, this is a cyclic peptide.

Functionally, probably participates in a plant defense mechanism. This is Cyclotide vpub-A from Viola pubescens (Downy yellow violet).